The following is a 347-amino-acid chain: N-acetyl-gamma-glutamyl-phosphate reductase (347 aa).

Cys-153 is an active-site residue.

The protein belongs to the NAGSA dehydrogenase family. Type 1 subfamily.

The protein localises to the cytoplasm. The enzyme catalyses N-acetyl-L-glutamate 5-semialdehyde + phosphate + NADP(+) = N-acetyl-L-glutamyl 5-phosphate + NADPH + H(+). The protein operates within amino-acid biosynthesis; L-arginine biosynthesis; N(2)-acetyl-L-ornithine from L-glutamate: step 3/4. Its function is as follows. Catalyzes the NADPH-dependent reduction of N-acetyl-5-glutamyl phosphate to yield N-acetyl-L-glutamate 5-semialdehyde. The protein is N-acetyl-gamma-glutamyl-phosphate reductase of Mycobacterium leprae (strain Br4923).